A 126-amino-acid chain; its full sequence is Probable flagellum biosynthesis repressor protein FlbT (126 aa).

Belongs to the FlbT family.

Has a post-transcriptional repressor function in flagellum biogenesis. Associates with the 5'-UTR of fljK mRNA and promotes its degradation. The polypeptide is Probable flagellum biosynthesis repressor protein FlbT (Rhodopseudomonas palustris (strain ATCC BAA-98 / CGA009)).